The sequence spans 365 residues: Histidinol-phosphate aminotransferase (365 aa).

The interval 1 to 21 (MSRPVPNPGILDIAPYTPGKS) is disordered. N6-(pyridoxal phosphate)lysine is present on K221.

The protein belongs to the class-II pyridoxal-phosphate-dependent aminotransferase family. Histidinol-phosphate aminotransferase subfamily. As to quaternary structure, homodimer. The cofactor is pyridoxal 5'-phosphate.

It carries out the reaction L-histidinol phosphate + 2-oxoglutarate = 3-(imidazol-4-yl)-2-oxopropyl phosphate + L-glutamate. It functions in the pathway amino-acid biosynthesis; L-histidine biosynthesis; L-histidine from 5-phospho-alpha-D-ribose 1-diphosphate: step 7/9. In Rhodopseudomonas palustris (strain ATCC BAA-98 / CGA009), this protein is Histidinol-phosphate aminotransferase.